Here is a 1122-residue protein sequence, read N- to C-terminus: Breast carcinoma-amplified sequence 3 homolog (1122 aa).

Residues 1–41 form a disordered region; it reads MSADSPRRHPSGVVGSGIGLGSGSGTGLGSGSTGGSKSGAA. The span at 14-37 shows a compositional bias: gly residues; that stretch reads VGSGIGLGSGSGTGLGSGSTGGSK. Ser55 is modified (phosphoserine). 4 stretches are compositionally biased toward low complexity: residues 357–377, 626–641, 966–987, and 1036–1051; these read GTTA…ASGG, GSNS…SLSD, TKDN…PSSN, and LSLE…PLSL. Disordered stretches follow at residues 357–382, 620–644, 966–990, 1033–1054, and 1071–1122; these read GTTA…DAKQ, GVGV…DDSG, TKDN…NKVQ, NSRL…LTNG, and GVAQ…RRNL. A Phosphoserine modification is found at Ser638. Acidic residues predominate over residues 1087–1112; sequence VDDDDEEEEEEEEELDEEAEPDDDER. Basic and acidic residues predominate over residues 1113 to 1122; sequence EDRPLGRRNL.

This sequence belongs to the BCAS3 family. Expressed in all postembryonic pericardial cells, but not in cardioblasts. Also expressed in Garland cells in third instar larvae (at protein level).

It localises to the cytoplasm. Its function is as follows. Regulates macropinocytosis in pericardial cells. The chain is Breast carcinoma-amplified sequence 3 homolog (rudhira) from Drosophila melanogaster (Fruit fly).